Consider the following 745-residue polypeptide: MNLNDRVEGIGNERSIVAKSTERKNKIPPSLKLSPVESVGEKSPTPATVYDLFKKYHKSDSVKPTEEDNMNVGFDKLSTDEKNGFLRKLQMLTVGSKKSSKVDESTPSPANRLLKKIVPSRRTSTEHPNSSNRMHIFGSSRTTKKSIDSERNSQRKKSARRLNFERDAEQKKDSTKTNNSSFVAEMTREYEKIVISKGAPVPINKANRNLYRNPRGSLETPTDSPQKGFSSSTESSPSDSMNQFPSREHFTSANEESPMKRKNFQQEHGNKNRDSDATWFGELPPRDYTSPTFSRKIFVGGVPWDITEAALKDSFGEFGSCAVEWPGQEARYRSGQSNLAPSNGSLRAQTKYTGQAATGYVYMIFEDERAVASLLHECSQEIGGAGEWYFKIRAQRSKSTEIRQVQIIPWVTSDSMFCEDDTLLETGIEPKRTVFVGALHGMMTAQVLHSIMEDCFGAVECVQLDTDKFKYPIGSGRVTFREHGAYFKAIEMGYLHVYTSKFRKRVQIDPFLESTCCMVCNSQSAHCFCRNKNCFKYYCHNCWALDHGKDDDQEVHIPVIVPSSASKAFPGATTRRSQVSSSLSLKNGSNNSQVNNSIPHFPSAGFPIIVGAPAQTLSALYGYIQNGQQLLKPAVFEPPMTPSPSEINKNRRSFTEFSTPPTVFFNSTPVISPQKSVSDGSPLPAYYNSAAFLTPPPTYYGSPNHPTSSNISQPQQPYYGANLYYGFIPPQQHPSAMMRSPNYGQ.

Disordered stretches follow at residues 1–45 (MNLN…KSPT), 94–180 (VGSK…TNNS), and 204–283 (NKAN…FGEL). Residues 162–175 (LNFERDAEQKKDST) are compositionally biased toward basic and acidic residues. Residues 219–229 (ETPTDSPQKGF) are compositionally biased toward polar residues. The span at 230–240 (SSSTESSPSDS) shows a compositional bias: low complexity. The span at 241 to 255 (MNQFPSREHFTSANE) shows a compositional bias: polar residues. A compositionally biased stretch (basic and acidic residues) spans 264–276 (FQQEHGNKNRDSD). The region spanning 297–319 (IFVGGVPWDITEAALKDSFGEFG) is the RRM domain.

Functionally, cytoplasmic polyadenylation element binding protein that binds to and regulates the translation of specific mRNAs. May not be required for oogenesis. The sequence is that of Cytoplasmic polyadenylation element-binding protein 3 (cpb-3) from Caenorhabditis elegans.